The following is a 504-amino-acid chain: Maturase K (504 aa).

It belongs to the intron maturase 2 family. MatK subfamily.

The protein resides in the plastid. It localises to the chloroplast. In terms of biological role, usually encoded in the trnK tRNA gene intron. Probably assists in splicing its own and other chloroplast group II introns. The polypeptide is Maturase K (Draba nemorosa (Woodland whitlowgrass)).